Reading from the N-terminus, the 362-residue chain is Tyrosine-protein kinase SRK2 (362 aa).

In terms of domain architecture, SH2 spans 1–70 (TFLVRESESK…GLCVNLRQPC (70 aa)). Residues 95–348 (ITLIRKLGAG…ALQWRLEDFF (254 aa)) enclose the Protein kinase domain. ATP is bound by residues 101–109 (LGAGQFGEV) and lysine 123. The active-site Proton acceptor is the aspartate 214.

The protein belongs to the protein kinase superfamily. Tyr protein kinase family.

It is found in the cytoplasm. The catalysed reaction is L-tyrosyl-[protein] + ATP = O-phospho-L-tyrosyl-[protein] + ADP + H(+). In Spongilla lacustris (Freshwater sponge), this protein is Tyrosine-protein kinase SRK2 (SRK2).